A 63-amino-acid polypeptide reads, in one-letter code: Mu-like prophage FluMu protein gp38 (63 aa).

To phage Mu protein gp38.

This Haemophilus influenzae (strain ATCC 51907 / DSM 11121 / KW20 / Rd) protein is Mu-like prophage FluMu protein gp38.